Reading from the N-terminus, the 513-residue chain is MHLPSLSLSLTALAIASPSAAYPHFGSSQPVLHSSSDTTQSRADAIKAAFSHAWDGYLQYAFPHDELHPVSNGYGDSRNGWGASAVDALSTAVIMRNATIVNQILDHVGKIDYSKTNTTVSLFETTIRYLGGMLSGYDLLKGPVSDLVQNSSKIDVLLTQSKNLADVLKFAFDTPSGVPYNNLNITSGGNDGAKTNGLAVTGTLALEWTRLSDLTGDTTYADLSQKAESYLLNPQPKSAEPFPGLVGSNINISNGQFTDAQVSWNGGDDSYYEYLIKMYVYDPKRFGLYKDRWVAAAQSTMQHLASHPSSRPDLTFLASYNNGTLGLSSQHLTCFDGGSFLLGGTVLNRTDFINFGLDLVSGCHDTYNSTLTGIGPESFSWDTSDIPSSQQSLYEKAGFYITSGAYILRPEVIESFYYAWRVTGQETYRDWIWSAFSAVNDYCRTSSGFSGLTDVNAANGGSRYDNQESFLFAEVMKYSYMAFAEDAAWQVQPGSGNQFVFNTEAHPVRVSST.

The signal sequence occupies residues 1–21; sequence MHLPSLSLSLTALAIASPSAA. N97, N117, N150, N184, N251, N322, N348, and N368 each carry an N-linked (GlcNAc...) asparagine glycan. Residues C334 and C363 are joined by a disulfide bond. E377 acts as the Proton donor in catalysis. T503 is a binding site for Ca(2+).

It belongs to the glycosyl hydrolase 47 family. Monomer. Ca(2+) is required as a cofactor. The cofactor is Mg(2+).

It is found in the cytoplasmic vesicle lumen. It carries out the reaction N(4)-(alpha-D-Man-(1-&gt;2)-alpha-D-Man-(1-&gt;2)-alpha-D-Man-(1-&gt;3)-[alpha-D-Man-(1-&gt;2)-alpha-D-Man-(1-&gt;3)-[alpha-D-Man-(1-&gt;2)-alpha-D-Man-(1-&gt;6)]-alpha-D-Man-(1-&gt;6)]-beta-D-Man-(1-&gt;4)-beta-D-GlcNAc-(1-&gt;4)-beta-D-GlcNAc)-L-asparaginyl-[protein] (N-glucan mannose isomer 9A1,2,3B1,2,3) + 4 H2O = N(4)-(alpha-D-Man-(1-&gt;3)-[alpha-D-Man-(1-&gt;3)-[alpha-D-Man-(1-&gt;6)]-alpha-D-Man-(1-&gt;6)]-beta-D-Man-(1-&gt;4)-beta-D-GlcNAc-(1-&gt;4)-beta-D-GlcNAc)-L-asparaginyl-[protein] (N-glucan mannose isomer 5A1,2) + 4 beta-D-mannose. It catalyses the reaction N(4)-(alpha-D-Man-(1-&gt;2)-alpha-D-Man-(1-&gt;2)-alpha-D-Man-(1-&gt;3)-[alpha-D-Man-(1-&gt;3)-[alpha-D-Man-(1-&gt;2)-alpha-D-Man-(1-&gt;6)]-alpha-D-Man-(1-&gt;6)]-beta-D-Man-(1-&gt;4)-beta-D-GlcNAc-(1-&gt;4)-beta-D-GlcNAc)-L-asparaginyl-[protein] (N-glucan mannose isomer 8A1,2,3B1,3) + 3 H2O = N(4)-(alpha-D-Man-(1-&gt;3)-[alpha-D-Man-(1-&gt;3)-[alpha-D-Man-(1-&gt;6)]-alpha-D-Man-(1-&gt;6)]-beta-D-Man-(1-&gt;4)-beta-D-GlcNAc-(1-&gt;4)-beta-D-GlcNAc)-L-asparaginyl-[protein] (N-glucan mannose isomer 5A1,2) + 3 beta-D-mannose. It functions in the pathway protein modification; protein glycosylation. Its function is as follows. Involved in the maturation of Asn-linked oligosaccharides. Progressively trims alpha-1,2-linked mannose residues from Man(9)GlcNAc(2) to produce Man(5)GlcNAc(2). The sequence is that of Mannosyl-oligosaccharide alpha-1,2-mannosidase 1B (mns1B) from Aspergillus phoenicis (Aspergillus saitoi).